Reading from the N-terminus, the 250-residue chain is MAVCGLGSRLGLGSRLGLRGCFGAARLLYPRFQSRGPQGVEDGDRPQPSSKTPRIPKIYTKTGDKGFSSTFTGERRPKDDQVFEAVGTTDELSSAIGFALELVTEKGHTFAEELQKIQCTLQDVGSALATPCSSAREAHLKYTTFKAGPILELEQWIDKYTSQLPPLTAFILPSGGKISSALHFCRAVCRRAERRVVPLVQMGETDANVAKFLNRLSDYLFTLARYAAMKEGNQEKIYMKNDPSAESEGL.

The N-terminal 32 residues, 1 to 32, are a transit peptide targeting the mitochondrion; sequence MAVCGLGSRLGLGSRLGLRGCFGAARLLYPRF. Positions 34-59 are disordered; it reads SRGPQGVEDGDRPQPSSKTPRIPKIY. ATP-binding positions include 60-63, 68-69, and lysine 78; these read TKTG and SS. Serine 134 is subject to Phosphoserine. 190–194 lines the ATP pocket; the sequence is RRAER. At lysine 211 the chain carries N6-succinyllysine. An ATP-binding site is contributed by asparagine 214. Lysine 230 carries the post-translational modification N6-acetyllysine; alternate. At lysine 230 the chain carries N6-succinyllysine; alternate.

Belongs to the Cob(I)alamin adenosyltransferase family. In terms of assembly, homotrimer. In terms of tissue distribution, expressed in liver and skeletal muscle.

The protein resides in the mitochondrion. The enzyme catalyses cob(I)alamin-[corrinoid adenosyltransferase] + ATP = apo-[corrinoid adenosyltransferase] + adenosylcob(III)alamin + triphosphate. Its function is as follows. Converts cob(I)alamin to adenosylcobalamin (adenosylcob(III)alamin), a coenzyme for methylmalonyl-CoA mutase, therefore participates in the final step of the vitamin B12 conversion. Generates adenosylcobalamin (AdoCbl) and directly delivers the cofactor to MUT in a transfer that is stimulated by ATP-binding to MMAB and gated by MMAA. In Homo sapiens (Human), this protein is Corrinoid adenosyltransferase MMAB.